The following is a 410-amino-acid chain: Probable peptidoglycan glycosyltransferase FtsW (410 aa).

The Cytoplasmic segment spans residues 1-37 (MRSEERQLNLFGTSVNWSWPNLFKEREAPGMQLYDRA). The helical transmembrane segment at 38-58 (LLFAVLSLICFGFVMVMSASM) threads the bilayer. Residues 59-69 (PEAQSLTGNPY) lie on the Periplasmic side of the membrane. Residues 70 to 90 (HFAIRHFAYLVGCAVIAAVVL) form a helical membrane-spanning segment. Topologically, residues 91–99 (RIEMSRWQQ) are cytoplasmic. The chain crosses the membrane as a helical span at residues 100–120 (FSPLLLLIVGIMLVAVLLVGT). The Periplasmic portion of the chain corresponds to 121 to 131 (SVNGATRWLSV). The helical transmembrane segment at 132 to 154 (GPIRIQVAELAKFAFTIYMAGYL) threads the bilayer. The Cytoplasmic portion of the chain corresponds to 155-163 (VRRHQEIRE). The helical transmembrane segment at 164 to 184 (NAKGFYKPIAVFAVYAFLILM) threads the bilayer. Residues 185–186 (QP) are Periplasmic-facing. The chain crosses the membrane as a helical span at residues 187–207 (DLGTVVVLFVGTVGLLFLAGA). Arginine 208 is a topological domain (cytoplasmic). Residues 209 to 229 (LLDFFALILTGVMAFVALVLL) traverse the membrane as a helical segment. Residues 230–291 (EPYRMRRVTS…PEAHTDFIFA (62 aa)) are Periplasmic-facing. A helical membrane pass occupies residues 292–312 (VIGEELGFIGIVVVLSVLLFV). At 313 to 336 (ALRAIKLGNLCIEIDKPFEGYLAY) the chain is on the cytoplasmic side. The helical transmembrane segment at 337–357 (AIGIWFCFQTVVNVGASIGML) threads the bilayer. Topologically, residues 358-364 (PTKGLTL) are periplasmic. Residues 365–385 (PFISYGGSSLWVMTAAAMILI) traverse the membrane as a helical segment. The Cytoplasmic segment spans residues 386-410 (RIDHERRLSSIQAVQGKKVNDNREY).

It belongs to the SEDS family. FtsW subfamily.

The protein localises to the cell inner membrane. It catalyses the reaction [GlcNAc-(1-&gt;4)-Mur2Ac(oyl-L-Ala-gamma-D-Glu-L-Lys-D-Ala-D-Ala)](n)-di-trans,octa-cis-undecaprenyl diphosphate + beta-D-GlcNAc-(1-&gt;4)-Mur2Ac(oyl-L-Ala-gamma-D-Glu-L-Lys-D-Ala-D-Ala)-di-trans,octa-cis-undecaprenyl diphosphate = [GlcNAc-(1-&gt;4)-Mur2Ac(oyl-L-Ala-gamma-D-Glu-L-Lys-D-Ala-D-Ala)](n+1)-di-trans,octa-cis-undecaprenyl diphosphate + di-trans,octa-cis-undecaprenyl diphosphate + H(+). It functions in the pathway cell wall biogenesis; peptidoglycan biosynthesis. Its function is as follows. Peptidoglycan polymerase that is essential for cell division. The chain is Probable peptidoglycan glycosyltransferase FtsW from Shewanella sediminis (strain HAW-EB3).